A 284-amino-acid chain; its full sequence is D-tagatose-1,6-bisphosphate aldolase subunit GatY (284 aa).

D82 (proton donor) is an active-site residue. 2 residues coordinate Zn(2+): H83 and H180. Residue G181 participates in dihydroxyacetone phosphate binding. A Zn(2+)-binding site is contributed by H208. Dihydroxyacetone phosphate contacts are provided by residues 209 to 211 (GAS) and 230 to 233 (NVAT).

This sequence belongs to the class II fructose-bisphosphate aldolase family. TagBP aldolase GatY subfamily. In terms of assembly, forms a complex with GatZ. The cofactor is Zn(2+).

The enzyme catalyses D-tagatofuranose 1,6-bisphosphate = D-glyceraldehyde 3-phosphate + dihydroxyacetone phosphate. It participates in carbohydrate metabolism; D-tagatose 6-phosphate degradation; D-glyceraldehyde 3-phosphate and glycerone phosphate from D-tagatose 6-phosphate: step 2/2. Catalytic subunit of the tagatose-1,6-bisphosphate aldolase GatYZ, which catalyzes the reversible aldol condensation of dihydroxyacetone phosphate (DHAP or glycerone-phosphate) with glyceraldehyde 3-phosphate (G3P) to produce tagatose 1,6-bisphosphate (TBP). Requires GatZ subunit for full activity and stability. Is involved in the catabolism of galactitol. The sequence is that of D-tagatose-1,6-bisphosphate aldolase subunit GatY from Escherichia coli O45:K1 (strain S88 / ExPEC).